Here is a 768-residue protein sequence, read N- to C-terminus: Transferrin receptor protein 1 (768 aa).

The Cytoplasmic portion of the chain corresponds to 1–68; it reads MMDQARSAFS…VAKPKRLNGY (68 aa). Residues 1-70 are mediates interaction with SH3BP4; that stretch reads MMDQARSAFS…KPKRLNGYVC (70 aa). Residues Ser-10 and Ser-19 each carry the phosphoserine modification. Position 20 is a phosphotyrosine (Tyr-20). Positions 20 to 23 match the Endocytosis signal motif; it reads YTRF. At Thr-21 the chain carries Phosphothreonine. Ser-24 is subject to Phosphoserine. Residues 61-64 carry the Stop-transfer sequence motif; that stretch reads KPKR. Residues 69-89 form a helical membrane-spanning segment; it reads VCYGIIAVITFFLIGFMIGYL. Cys-70 carries S-palmitoyl cysteine lipidation. The Extracellular segment spans residues 90 to 768; the sequence is AYCKRVESKT…GDIWDIDNEF (679 aa). Residues 231–321 enclose the PA domain; that stretch reads SKATTVTGKL…GTGDPYTPGF (91 aa). Asn-259 and Asn-325 each carry an N-linked (GlcNAc...) asparagine glycan. Residues 577-768 are ligand-binding; sequence TMDTYDVLSK…GDIWDIDNEF (192 aa). A Cell attachment site motif is present at residues 654 to 656; it reads RGD. Asn-730 and Asn-735 each carry an N-linked (GlcNAc...) asparagine glycan.

The protein belongs to the peptidase M28 family. M28B subfamily. As to quaternary structure, homodimer; disulfide-linked. Binds one transferrin or HFE molecule per subunit. Interacts with SH3BP4. Interacts with SH3BP3. Interacts with STEAP3; facilitates TFRC endocytosis in erythroid precursor cells. Post-translationally, stearoylated by ZDHHC6 which inhibits TFRC-mediated activation of the JNK pathway and promotes mitochondrial fragmentation. Stearoylation does not affect iron uptake.

The protein resides in the cell membrane. It localises to the melanosome. Its function is as follows. Cellular uptake of iron occurs via receptor-mediated endocytosis of ligand-occupied transferrin receptor into specialized endosomes. Endosomal acidification leads to iron release. The apotransferrin-receptor complex is then recycled to the cell surface with a return to neutral pH and the concomitant loss of affinity of apotransferrin for its receptor. Transferrin receptor is necessary for development of erythrocytes and the nervous system. Positively regulates T and B cell proliferation through iron uptake. Acts as a lipid sensor that regulates mitochondrial fusion by regulating activation of the JNK pathway. When dietary levels of stearate (C18:0) are low, promotes activation of the JNK pathway, resulting in HUWE1-mediated ubiquitination and subsequent degradation of the mitofusin MFN2 and inhibition of mitochondrial fusion. When dietary levels of stearate (C18:0) are high, TFRC stearoylation inhibits activation of the JNK pathway and thus degradation of the mitofusin MFN2. Mediates uptake of NICOL1 into fibroblasts where it may regulate extracellular matrix production. The chain is Transferrin receptor protein 1 (TFRC) from Sus scrofa (Pig).